Consider the following 780-residue polypeptide: Putative ABC transporter ATP-binding protein BL0043 (780 aa).

ABC transporter domains are found at residues 2-238 (LKDI…QSET) and 282-531 (IRVS…GPAH). 34–41 (GPNGSGKS) is an ATP binding site. Positions 230-272 (AEAVSQSETEGSIGTEAAPSRPTNDSPRQREREDGSELPLLSD) are disordered. 316–323 (GVNGSGKS) contacts ATP. 4 helical membrane passes run 551–573 (FTMF…LAVI), 586–608 (SIHP…VRTG), 623–645 (GVTI…AVFL), and 759–778 (IAAR…AAII).

Belongs to the ABC transporter superfamily.

The protein resides in the cell membrane. Its function is as follows. Probably part of an ABC transporter complex. Responsible for energy coupling to the transport system. The sequence is that of Putative ABC transporter ATP-binding protein BL0043 from Bifidobacterium longum (strain NCC 2705).